A 79-amino-acid chain; its full sequence is uncharacterized protein (79 aa).

An N-terminal signal peptide occupies residues 1–20 (MSQLMGIITRLQSLQETAEA).

This is an uncharacterized protein from Bacillus subtilis (strain 168).